We begin with the raw amino-acid sequence, 214 residues long: MGLSHSHSVETRQLVEKTGFSAEQIEHLHKRFNSLSGDLLTIRKGHLNGISDLEVNPIRSKIVDAFFDKRNLRKGSSGYVEEINFEEFLTIMSYFRPLSQNMDEENISVCRKDKLRFLFNMYDTDNDSKITLEEYRKVVEELLSGNPNIEKETARSIADGAMLEAASICVGQMEPDQVYEGITFDDFLKIWEGIDIETKMHIRFLNMESIPSCR.

Glycine 2 carries the N-myristoyl glycine lipid modification. In terms of domain architecture, EF-hand spans 110-145 (CRKDKLRFLFNMYDTDNDSKITLEEYRKVVEELLSG). 5 residues coordinate Ca(2+): aspartate 123, aspartate 125, aspartate 127, lysine 129, and glutamate 134.

Belongs to the calcineurin regulatory subunit family. CHP subfamily. In terms of assembly, monomer. Homodimer.

Its subcellular location is the nucleus. It is found in the cytoplasm. The protein resides in the membrane. The protein localises to the cell membrane. It localises to the cell projection. Its subcellular location is the lamellipodium. It is found in the ruffle membrane. In terms of biological role, functions as an integral cofactor in cell pH regulation by controlling plasma membrane-type Na(+)/H(+) exchange activity. Promotes the induction of hematopoietic stem cell differentiation toward megakaryocytic lineage. Essential for the coupling of ERK cascade activation with the expression of ETS family genes in megakaryocytic differentiation. Also involved in granulocytic differentiation in a ERK-dependent manner. Inhibits the phosphatase activity of calcineurin. This chain is Calcineurin B homologous protein 3 (tesc), found in Xenopus tropicalis (Western clawed frog).